Reading from the N-terminus, the 98-residue chain is MIPDPRDVILRPVVSEKSYGLLDENVYTFIVHPDANKTQIKLAVQQIFSVRVLRVNTINRQGKRKRTKHGWGHRSATKRALVSLAPGDTIEIFGGPGA.

It belongs to the universal ribosomal protein uL23 family. As to quaternary structure, part of the 50S ribosomal subunit. Contacts protein L29, and trigger factor when it is bound to the ribosome.

Functionally, one of the early assembly proteins it binds 23S rRNA. One of the proteins that surrounds the polypeptide exit tunnel on the outside of the ribosome. Forms the main docking site for trigger factor binding to the ribosome. This chain is Large ribosomal subunit protein uL23, found in Frankia alni (strain DSM 45986 / CECT 9034 / ACN14a).